Here is a 216-residue protein sequence, read N- to C-terminus: Ribosome maturation factor RimP (216 aa).

The protein belongs to the RimP family.

The protein resides in the cytoplasm. In terms of biological role, required for maturation of 30S ribosomal subunits. This is Ribosome maturation factor RimP from Bartonella henselae (strain ATCC 49882 / DSM 28221 / CCUG 30454 / Houston 1) (Rochalimaea henselae).